Reading from the N-terminus, the 66-residue chain is DNA-directed RNA polymerase subunit omega (66 aa).

The protein belongs to the RNA polymerase subunit omega family. The RNAP catalytic core consists of 2 alpha, 1 beta, 1 beta' and 1 omega subunit. When a sigma factor is associated with the core the holoenzyme is formed, which can initiate transcription.

It catalyses the reaction RNA(n) + a ribonucleoside 5'-triphosphate = RNA(n+1) + diphosphate. In terms of biological role, promotes RNA polymerase assembly. Latches the N- and C-terminal regions of the beta' subunit thereby facilitating its interaction with the beta and alpha subunits. The polypeptide is DNA-directed RNA polymerase subunit omega (Clostridium botulinum (strain Alaska E43 / Type E3)).